The chain runs to 510 residues: Peptide transporter imqJ (510 aa).

Helical transmembrane passes span M1–A21, I31–P51, and G57–I77. N-linked (GlcNAc...) asparagine glycosylation is present at N80. A run of 4 helical transmembrane segments spans residues I116–I136, F143–V163, I231–S251, and I269–L289. The 121-residue stretch at P348–A468 folds into the Fe2OG dioxygenase domain. Fe cation is bound by residues H377 and D379. Residue N421 is glycosylated (N-linked (GlcNAc...) asparagine). A Fe cation-binding site is contributed by H439. R459 contacts 2-oxoglutarate.

It belongs to the major facilitator superfamily. Proton-dependent oligopeptide transporter (POT/PTR) (TC 2.A.17) family.

Its subcellular location is the membrane. Peptide transporter; part of the gene cluster that mediates the biosynthesis of imizoquins A to D, tripeptide-derived alkaloids that serve a protective role against oxidative stress that are essential for normal germination. The chain is Peptide transporter imqJ from Aspergillus flavus (strain ATCC 200026 / FGSC A1120 / IAM 13836 / NRRL 3357 / JCM 12722 / SRRC 167).